Reading from the N-terminus, the 177-residue chain is Alpha-crystallin B chain (177 aa).

The residue at position 1 (methionine 1) is an N-acetylmethionine. The sHSP domain maps to 58 to 166 (RMPSWAQTGL…PERSVPISRD (109 aa)). Zn(2+) contacts are provided by histidine 85, histidine 106, glutamate 108, histidine 113, and histidine 121. The segment covering 155 to 169 (DVPERSVPISRDEKP) has biased composition (basic and acidic residues). The interval 155 to 177 (DVPERSVPISRDEKPAVAGPQQK) is disordered.

This sequence belongs to the small heat shock protein (HSP20) family. In terms of assembly, heteromer composed of three CRYAA and one CRYAB subunits. Aggregates with homologous proteins, including the small heat shock protein HSPB1, to form large heteromeric complexes. Inter-subunit bridging via zinc ions enhances stability, which is crucial as there is no protein turn over in the lens. Interacts with HSPBAP1 and TTN/titin.

In terms of biological role, may contribute to the transparency and refractive index of the lens. In Squalus acanthias (Spiny dogfish), this protein is Alpha-crystallin B chain (CRYAB).